Reading from the N-terminus, the 776-residue chain is Transcription activator of gluconeogenesis HCAG_03671 (776 aa).

Residues 1–70 form a disordered region; sequence MTASTQNGSP…NAKDPLRPRR (70 aa). Composition is skewed to polar residues over residues 21 to 41 and 50 to 60; these read NQES…QSPA and ENGQKHTSTAA. The segment at residues 77-105 is a DNA-binding region (zn(2)-C6 fungal-type); that stretch reads CFACQRAHLTCGDERPCQRCIKRGLQDAC. Disordered regions lie at residues 140–159, 179–248, 286–351, 556–593, and 651–726; these read RTNA…KDSR, TQAK…PFGA, GAGD…NIYN, NLNV…GGGG, and REAQ…SPKQ. The span at 142 to 155 shows a compositional bias: low complexity; that stretch reads NASQQQNGPNSNSN. Positions 195-217 are enriched in polar residues; it reads MQDTSINPSAFQAPSPTSTPNFD. Low complexity predominate over residues 218-229; that stretch reads LSSNPPNRNLSS. Composition is skewed to polar residues over residues 230–244, 292–322, 334–351, and 557–576; these read AMTQ…QTQD, PSDS…NTQP, WNPS…NIYN, and LNVN…TPRN. Residues 657–669 are compositionally biased toward gly residues; that stretch reads GPDGKGGGGGGGD. Low complexity predominate over residues 670–714; sequence VATTAATTSTSTSNGANSSGHANANRNNTNPNNSSPPSSSSAAAA.

Belongs to the ERT1/acuK family.

Its subcellular location is the nucleus. In terms of biological role, transcription factor which regulates nonfermentable carbon utilization. Activator of gluconeogenetic genes. The polypeptide is Transcription activator of gluconeogenesis HCAG_03671 (Ajellomyces capsulatus (strain NAm1 / WU24) (Darling's disease fungus)).